The following is a 192-amino-acid chain: Na(+)-translocating ferredoxin:NAD(+) oxidoreductase complex subunit A (192 aa).

The next 6 helical transmembrane spans lie at 4–24, 38–58, 71–91, 101–121, 133–153, and 169–189; these read IFIMISAIFVNNFVLSRFLGI, VGMGVAVTFVMALASAITYVV, LQTIAFILIIAALVQLVEMII, ALGVYLPLITTNCAVLGVALI, IFNGVGAALGFTLAIVLFAGI, and FPIALLTAGLMAIAFLGFSGM.

It belongs to the NqrDE/RnfAE family. In terms of assembly, the complex is composed of six subunits: RnfA, RnfB, RnfC, RnfD, RnfE and RnfG.

The protein localises to the cell membrane. It catalyses the reaction 2 reduced [2Fe-2S]-[ferredoxin] + Na(+)(in) + NAD(+) + H(+) = 2 oxidized [2Fe-2S]-[ferredoxin] + Na(+)(out) + NADH. Its function is as follows. Part of a membrane-bound complex that couples electron transfer with translocation of ions across the membrane. Couples electron transfer from reduced ferredoxin to NAD(+) with electrogenic movement of Na(+) out of the cell. Involved in caffeate respiration. The polypeptide is Na(+)-translocating ferredoxin:NAD(+) oxidoreductase complex subunit A (Acetobacterium woodii (strain ATCC 29683 / DSM 1030 / JCM 2381 / KCTC 1655 / WB1)).